Here is a 216-residue protein sequence, read N- to C-terminus: Phosphoenolpyruvate guanylyltransferase (216 aa).

Phosphoenolpyruvate is bound by residues threonine 139, glycine 155, and serine 158.

This sequence belongs to the CofC family.

It catalyses the reaction phosphoenolpyruvate + GTP + H(+) = enolpyruvoyl-2-diphospho-5'-guanosine + diphosphate. The protein operates within cofactor biosynthesis; coenzyme F420 biosynthesis. Functionally, guanylyltransferase that catalyzes the activation of phosphoenolpyruvate (PEP) as enolpyruvoyl-2-diphospho-5'-guanosine, via the condensation of PEP with GTP. It is involved in the biosynthesis of coenzyme F420, a hydride carrier cofactor. In Streptomyces avermitilis (strain ATCC 31267 / DSM 46492 / JCM 5070 / NBRC 14893 / NCIMB 12804 / NRRL 8165 / MA-4680), this protein is Phosphoenolpyruvate guanylyltransferase.